The sequence spans 398 residues: Candidapepsin-3 (398 aa).

A signal peptide spans 1–18 (MFLKNIFIALAIALLADA). Residues 19 to 58 (TPTTSNNSPGFVALNFDVIKTHKNVTGPQGEINTNVNVKR) constitute a propeptide, activation peptide. The N-linked (GlcNAc...) asparagine glycan is linked to N42. Positions 72 to 384 (YASDITVGSN…DLDDNEISLA (313 aa)) constitute a Peptidase A1 domain. D90 is an active-site residue. Residue 90–92 (DTG) coordinates pepstatin A. The segment covering 103-112 (VSCQAGQGQD) has biased composition (polar residues). A disordered region spans residues 103–139 (VSCQAGQGQDPNFCKNEGTYSPSSSSSSQNLNSPFSI). C105 and C116 are oxidised to a cystine. Residues 123–138 (SPSSSSSSQNLNSPFS) are compositionally biased toward low complexity. Residues 140-143 (EYGD) and 274-278 (DSGTT) contribute to the pepstatin A site. D274 is a catalytic residue. An intrachain disulfide couples C312 to C350. An N-linked (GlcNAc...) asparagine glycan is attached at N313.

Belongs to the peptidase A1 family. O-glycosylated.

It localises to the secreted. It carries out the reaction Preferential cleavage at the carboxyl of hydrophobic amino acids, but fails to cleave 15-Leu-|-Tyr-16, 16-Tyr-|-Leu-17 and 24-Phe-|-Phe-25 of insulin B chain. Activates trypsinogen, and degrades keratin.. In Candida albicans (strain WO-1) (Yeast), this protein is Candidapepsin-3 (SAP3).